The chain runs to 516 residues: Adenosine deaminase (516 aa).

The N-terminal stretch at Met-1–Asp-20 is a signal peptide.

The protein belongs to the metallo-dependent hydrolases superfamily. Adenosine and AMP deaminases family. ADGF subfamily. It depends on Zn(2+) as a cofactor. Salivary gland (at protein level).

It is found in the secreted. It carries out the reaction adenosine + H2O + H(+) = inosine + NH4(+). Functionally, catalyzes the deamination of adenosine to inosine. In Phlebotomus duboscqi (Sandfly), this protein is Adenosine deaminase.